Consider the following 227-residue polypeptide: Enolase-phosphatase E1 (227 aa).

Residues D11 and E13 each contribute to the Mg(2+) site. Substrate-binding positions include 118 to 119 and K161; that span reads SS. Residue D186 coordinates Mg(2+).

The protein belongs to the HAD-like hydrolase superfamily. MasA/MtnC family. Monomer. It depends on Mg(2+) as a cofactor.

It localises to the cytoplasm. It is found in the nucleus. The catalysed reaction is 5-methylsulfanyl-2,3-dioxopentyl phosphate + H2O = 1,2-dihydroxy-5-(methylsulfanyl)pent-1-en-3-one + phosphate. It participates in amino-acid biosynthesis; L-methionine biosynthesis via salvage pathway; L-methionine from S-methyl-5-thio-alpha-D-ribose 1-phosphate: step 3/6. The protein operates within amino-acid biosynthesis; L-methionine biosynthesis via salvage pathway; L-methionine from S-methyl-5-thio-alpha-D-ribose 1-phosphate: step 4/6. Functionally, bifunctional enzyme that catalyzes the enolization of 2,3-diketo-5-methylthiopentyl-1-phosphate (DK-MTP-1-P) into the intermediate 2-hydroxy-3-keto-5-methylthiopentenyl-1-phosphate (HK-MTPenyl-1-P), which is then dephosphorylated to form the acireductone 1,2-dihydroxy-3-keto-5-methylthiopentene (DHK-MTPene). In Saccharomyces cerevisiae (strain JAY291) (Baker's yeast), this protein is Enolase-phosphatase E1.